The following is a 434-amino-acid chain: Enolase (434 aa).

2 residues coordinate substrate: His-158 and Glu-167. Residue Glu-210 is the Proton donor of the active site. Residues Asp-245, Glu-294, and Asp-319 each coordinate Mg(2+). Glu-294 and Asp-319 together coordinate substrate. The active-site Proton acceptor is Lys-344. Substrate contacts are provided by residues 371–374 (SHRS) and Lys-395.

This sequence belongs to the enolase family. In terms of assembly, homodimer. The cofactor is Mg(2+).

It is found in the cytoplasm. The catalysed reaction is (2R)-2-phosphoglycerate = phosphoenolpyruvate + H2O. The protein operates within carbohydrate degradation; glycolysis; pyruvate from D-glyceraldehyde 3-phosphate: step 4/5. This is Enolase (ENO) from Schistosoma mansoni (Blood fluke).